A 201-amino-acid polypeptide reads, in one-letter code: Riboflavin synthase (201 aa).

Lumazine-binding repeat units lie at residues 1 to 97 (MFTG…LGGH) and 98 to 197 (IVQG…ERLM). Residues 4–6 (GIV), 47–49 (CLT), 62–67 (DVMAET), 101–103 (GHV), K136, 145–147 (SLT), and 162–167 (SLIPTT) each bind 2,4-dihydroxypteridine.

As to quaternary structure, homotrimer.

The catalysed reaction is 2 6,7-dimethyl-8-(1-D-ribityl)lumazine + H(+) = 5-amino-6-(D-ribitylamino)uracil + riboflavin. It functions in the pathway cofactor biosynthesis; riboflavin biosynthesis; riboflavin from 2-hydroxy-3-oxobutyl phosphate and 5-amino-6-(D-ribitylamino)uracil: step 2/2. Its function is as follows. Catalyzes the dismutation of two molecules of 6,7-dimethyl-8-ribityllumazine, resulting in the formation of riboflavin and 5-amino-6-(D-ribitylamino)uracil. This chain is Riboflavin synthase (ribE), found in Mycobacterium bovis (strain ATCC BAA-935 / AF2122/97).